The primary structure comprises 150 residues: DNA-directed RNA polymerases I, II, and III subunit RPABC3 (150 aa).

Ala2 is modified (N-acetylalanine).

This sequence belongs to the eukaryotic RPB8 RNA polymerase subunit family. In terms of assembly, component of the RNA polymerase I (Pol I), RNA polymerase II (Pol II) and RNA polymerase III (Pol III) complexes consisting of at least 13, 12 and 17 subunits, respectively. Pol I complex consists of a ten-subunit catalytic core composed of POLR1A/RPA1, POLR1B/RPA2, POLR1C/RPAC1, POLR1D/RPAC2, POLR1H/RPA12, POLR2E/RPABC1, POLR2F/RPABC2, POLR2H/RPABC3, POLR2K/RPABC4 and POLR2L/RPABC5; a mobile stalk subunit POLR1F/RPA43 protruding from the core and additional subunits homologous to general transcription factors POLR1E/RPA49 and POLR1G/RPA34. Part of Pol I pre-initiation complex (PIC), in which Pol I core assembles with RRN3 and promoter-bound UTBF and SL1/TIF-IB complex. Pol II complex contains a ten-subunit catalytic core composed of POLR2A/RPB1, POLR2B/RPB2, POLR2C/RPB3, POLR2I/RPB9, POLR2J/RPB11, POLR2E/RPABC1, POLR2F/RPABC2, POLR2H/RPABC3, POLR2K/RPABC4 and POLR2L/RPABC5 and a mobile stalk composed of two subunits POLR2D/RPB4 and POLR2G/RPB7. Part of Pol II(G) complex, in which Pol II core associates with an additional subunit POLR2M; unlike conventional Pol II, Pol II(G) functions as a transcriptional repressor. Part of Pol II pre-initiation complex (PIC), in which Pol II core assembles with Mediator, general transcription factors and other specific initiation factors including GTF2E1, GTF2E2, GTF2F1, GTF2F2, TCEA1, ERCC2, ERCC3, GTF2H2, GTF2H3, GTF2H4, GTF2H5, GTF2A1, GTF2A2, GTF2B and TBP; this large multi-subunit PIC complex mediates DNA unwinding and targets Pol II core to the transcription start site where the first phosphodiester bond forms. Directly interacts with POLR2A. Pol III complex consists of a ten-subunit catalytic core composed of POLR3A/RPC1, POLR3B/RPC2, POLR1C/RPAC1, POLR1D/RPAC2, POLR3K/RPC10, POLR2E/RPABC1, POLR2F/RPABC2, POLR2H/RPABC3, POLR2K/RPABC4 and POLR2L/RPABC5; a mobile stalk composed of two subunits POLR3H/RPC8 and CRCP/RPC9, protruding from the core and functioning primarily in transcription initiation; and additional subunits homologous to general transcription factors of the RNA polymerase II machinery, POLR3C/RPC3-POLR3F/RPC6-POLR3G/RPC7 heterotrimer required for transcription initiation and POLR3D/RPC4-POLR3E/RPC5 heterodimer involved in both transcription initiation and termination.

Its subcellular location is the nucleus. The protein localises to the nucleolus. DNA-dependent RNA polymerase catalyzes the transcription of DNA into RNA using the four ribonucleoside triphosphates as substrates. Common component of RNA polymerases I, II and III which synthesize ribosomal RNA precursors, mRNA precursors and many functional non-coding RNAs, and small RNAs, such as 5S rRNA and tRNAs, respectively. The sequence is that of DNA-directed RNA polymerases I, II, and III subunit RPABC3 (POLR2H) from Bos taurus (Bovine).